The sequence spans 336 residues: Holliday junction branch migration complex subunit RuvB (336 aa).

Residues 4–184 (ADRLISAGTT…FGIVQRLEFY (181 aa)) form a large ATPase domain (RuvB-L) region. Residues Ile23, Arg24, Gly65, Lys68, Thr69, Thr70, 131–133 (EDY), Arg174, Tyr184, and Arg221 contribute to the ATP site. A Mg(2+)-binding site is contributed by Thr69. The small ATPAse domain (RuvB-S) stretch occupies residues 185–255 (QVPDLQYIVS…IAAQALDMLN (71 aa)). Residues 258–336 (AEGFDYMDRK…HFGITPPEMP (79 aa)) are head domain (RuvB-H). The DNA site is built by Arg294, Arg313, and Arg318.

It belongs to the RuvB family. As to quaternary structure, homohexamer. Forms an RuvA(8)-RuvB(12)-Holliday junction (HJ) complex. HJ DNA is sandwiched between 2 RuvA tetramers; dsDNA enters through RuvA and exits via RuvB. An RuvB hexamer assembles on each DNA strand where it exits the tetramer. Each RuvB hexamer is contacted by two RuvA subunits (via domain III) on 2 adjacent RuvB subunits; this complex drives branch migration. In the full resolvosome a probable DNA-RuvA(4)-RuvB(12)-RuvC(2) complex forms which resolves the HJ.

Its subcellular location is the cytoplasm. The enzyme catalyses ATP + H2O = ADP + phosphate + H(+). The RuvA-RuvB-RuvC complex processes Holliday junction (HJ) DNA during genetic recombination and DNA repair, while the RuvA-RuvB complex plays an important role in the rescue of blocked DNA replication forks via replication fork reversal (RFR). RuvA specifically binds to HJ cruciform DNA, conferring on it an open structure. The RuvB hexamer acts as an ATP-dependent pump, pulling dsDNA into and through the RuvAB complex. RuvB forms 2 homohexamers on either side of HJ DNA bound by 1 or 2 RuvA tetramers; 4 subunits per hexamer contact DNA at a time. Coordinated motions by a converter formed by DNA-disengaged RuvB subunits stimulates ATP hydrolysis and nucleotide exchange. Immobilization of the converter enables RuvB to convert the ATP-contained energy into a lever motion, pulling 2 nucleotides of DNA out of the RuvA tetramer per ATP hydrolyzed, thus driving DNA branch migration. The RuvB motors rotate together with the DNA substrate, which together with the progressing nucleotide cycle form the mechanistic basis for DNA recombination by continuous HJ branch migration. Branch migration allows RuvC to scan DNA until it finds its consensus sequence, where it cleaves and resolves cruciform DNA. The sequence is that of Holliday junction branch migration complex subunit RuvB from Shigella sonnei (strain Ss046).